Reading from the N-terminus, the 465-residue chain is 3-isopropylmalate dehydratase large subunit (465 aa).

[4Fe-4S] cluster contacts are provided by C346, C406, and C409.

The protein belongs to the aconitase/IPM isomerase family. LeuC type 1 subfamily. As to quaternary structure, heterodimer of LeuC and LeuD. [4Fe-4S] cluster serves as cofactor.

The catalysed reaction is (2R,3S)-3-isopropylmalate = (2S)-2-isopropylmalate. The protein operates within amino-acid biosynthesis; L-leucine biosynthesis; L-leucine from 3-methyl-2-oxobutanoate: step 2/4. In terms of biological role, catalyzes the isomerization between 2-isopropylmalate and 3-isopropylmalate, via the formation of 2-isopropylmaleate. In Leptospira interrogans serogroup Icterohaemorrhagiae serovar copenhageni (strain Fiocruz L1-130), this protein is 3-isopropylmalate dehydratase large subunit.